A 107-amino-acid chain; its full sequence is Putative septation protein SpoVG (107 aa).

A disordered region spans residues 82 to 107; it reads ETDEVIPDKNAQPSSDSEDNGSEEEA. The span at 97–107 shows a compositional bias: acidic residues; the sequence is DSEDNGSEEEA.

This sequence belongs to the SpoVG family.

Its function is as follows. Could be involved in septation. This Staphylococcus carnosus (strain TM300) protein is Putative septation protein SpoVG.